We begin with the raw amino-acid sequence, 507 residues long: F-box only protein 31 (507 aa).

A disordered region spans residues Arg19–Glu42. The residue at position 33 (Ser33) is a Phosphoserine. A compositionally biased stretch (acidic residues) spans Ser33 to Glu42. Thr37 bears the Phosphothreonine mark. The D box motif lies at Arg50–Glu55. In terms of domain architecture, F-box spans Arg50 to Arg96. Zn(2+) contacts are provided by Cys192, His200, Cys216, and His222. Ser264 is modified (phosphoserine; by ATM). A DDL motif motif is present at residues Asp283–Leu285. The disordered stretch occupies residues Arg364–Ser421. The segment covering Ala374–Glu385 has biased composition (basic and acidic residues). Phosphoserine is present on Ser448.

Belongs to the FBXO31 family. As to quaternary structure, part of a SCF (SKP1-cullin-F-box) protein ligase complex SCF(FBXO31) composed of CUL1, SKP1, RBX1 and FBXO31. Interacts (when phosphorylated at Ser-33) with CDC20, promoting ubiquitination by the APC/C complex. Phosphorylation at Ser-264 by ATM following gamma-irradiation results in its stabilization. Phosphorylation at Ser-448 in absence of stress promotes its ubiquitination and degradation by the SCF(FBXO46) complex. Phosphorylation at Ser-33 by AKT1 promotes association with CDC20 and ubiquitination by the APC/C complex. Post-translationally, ubiquitinated by the SCF(FBXO46) complex in absence of stress, promoting its degradation. Ubiquitinated by the APC/C complex following phosphorylation at Ser-33, leading to its degradation by the proteasome.

The protein localises to the cytoplasm. It is found in the cytoskeleton. The protein resides in the microtubule organizing center. It localises to the centrosome. The protein operates within protein modification; protein ubiquitination. Its function is as follows. Substrate-recognition component of the SCF(FBXO31) protein ligase complex, which specifically mediates the ubiquitination of proteins amidated at their C-terminus in response to oxidative stress, leading to their degradation by the proteasome. FBXO31 specifically recognizes and binds C-terminal peptides bearing an amide: C-terminal amidation in response to oxidative stress takes place following protein fragmentation. The SCF(FBXO31) also plays a role in G1 arrest following DNA damage by mediating ubiquitination of phosphorylated cyclin-D1 (CCND1), promoting its degradation by the proteasome, resulting in G1 arrest. The SCF(FBXO31) complex is however not a major regulator of CCND1 stability during the G1/S transition. In response to genotoxic stress, the SCF(FBXO31) complex directs ubiquitination and degradation of phosphorylated MDM2, thereby promoting p53/TP53-mediated DNA damage response. SCF(FBXO31) complex is required for genomic integrity by catalyzing ubiquitination and degradation of cyclin-A (CCNA1 and/or CCNA2) during the G1 phase. In response to genotoxic stress, the SCF(FBXO31) complex directs ubiquitination and degradation of phosphorylated FBXO46 and MAP2K6. SCF(FBXO31) complex promotes ubiquitination and degradation of CDT1 during the G2 phase to prevent re-replication. The SCF(FBXO31) complex also mediates ubiquitination and degradation of DUSP6, OGT and PARD6A. This Rattus norvegicus (Rat) protein is F-box only protein 31.